The primary structure comprises 167 residues: Putative universal stress protein SSP1056 (167 aa).

The protein belongs to the universal stress protein A family.

Its subcellular location is the cytoplasm. The polypeptide is Putative universal stress protein SSP1056 (Staphylococcus saprophyticus subsp. saprophyticus (strain ATCC 15305 / DSM 20229 / NCIMB 8711 / NCTC 7292 / S-41)).